The following is a 226-amino-acid chain: Protein GrpE (226 aa).

Disordered stretches follow at residues 1–24 (MADE…PRDR) and 205–226 (GVSK…EDNA). Positions 217 to 226 (NGASTSEDNA) are enriched in polar residues.

The protein belongs to the GrpE family. As to quaternary structure, homodimer.

The protein resides in the cytoplasm. Its function is as follows. Participates actively in the response to hyperosmotic and heat shock by preventing the aggregation of stress-denatured proteins, in association with DnaK and GrpE. It is the nucleotide exchange factor for DnaK and may function as a thermosensor. Unfolded proteins bind initially to DnaJ; upon interaction with the DnaJ-bound protein, DnaK hydrolyzes its bound ATP, resulting in the formation of a stable complex. GrpE releases ADP from DnaK; ATP binding to DnaK triggers the release of the substrate protein, thus completing the reaction cycle. Several rounds of ATP-dependent interactions between DnaJ, DnaK and GrpE are required for fully efficient folding. The polypeptide is Protein GrpE (Brucella melitensis biotype 1 (strain ATCC 23456 / CCUG 17765 / NCTC 10094 / 16M)).